Consider the following 474-residue polypeptide: Sestrin homolog (474 aa).

Belongs to the sestrin family.

Its subcellular location is the nucleus. It is found in the cytoplasm. Its function is as follows. May function as a negative feedback regulator of TOR function. This Caenorhabditis elegans protein is Sestrin homolog.